The following is a 300-amino-acid chain: Chaperone protein dnaJ 50 (300 aa).

A signal peptide spans 1–27 (MAPPVTERWCLALILLFLSLFVQSSTA). The Lumenal segment spans residues 28-122 (IYCGAEDCYA…RAKYGHKSDP (95 aa)). A J domain is found at 34–98 (DCYALLGVAQ…TTRAQYDYAI (65 aa)). Residues Asn-46 and Asn-88 are each glycosylated (N-linked (GlcNAc...) asparagine). A helical transmembrane segment spans residues 123–143 (RAVLVGLLVVLSAFQYLNNVA). The Cytoplasmic segment spans residues 144-206 (RYNEAIATVK…LQIKGAEKPS (63 aa)). The chain crosses the membrane as a helical span at residues 207–227 (VWELLGVRFILLPYTIIKLLV). Topologically, residues 228–300 (WYSSWVWRYK…EMRKESKRRR (73 aa)) are lumenal.

In terms of tissue distribution, expressed in leaves, flower buds and flowers.

The protein localises to the endoplasmic reticulum membrane. Its function is as follows. May play a role in protein folding in the endoplasmic reticulum. The chain is Chaperone protein dnaJ 50 (C50) from Arabidopsis thaliana (Mouse-ear cress).